The primary structure comprises 195 residues: ATP-dependent Clp protease proteolytic subunit (195 aa).

Residue Ser-97 is the Nucleophile of the active site. Residue His-122 is part of the active site.

Belongs to the peptidase S14 family. As to quaternary structure, fourteen ClpP subunits assemble into 2 heptameric rings which stack back to back to give a disk-like structure with a central cavity, resembling the structure of eukaryotic proteasomes.

The protein localises to the cytoplasm. The catalysed reaction is Hydrolysis of proteins to small peptides in the presence of ATP and magnesium. alpha-casein is the usual test substrate. In the absence of ATP, only oligopeptides shorter than five residues are hydrolyzed (such as succinyl-Leu-Tyr-|-NHMec, and Leu-Tyr-Leu-|-Tyr-Trp, in which cleavage of the -Tyr-|-Leu- and -Tyr-|-Trp bonds also occurs).. Functionally, cleaves peptides in various proteins in a process that requires ATP hydrolysis. Has a chymotrypsin-like activity. Plays a major role in the degradation of misfolded proteins. The polypeptide is ATP-dependent Clp protease proteolytic subunit (Lactobacillus acidophilus (strain ATCC 700396 / NCK56 / N2 / NCFM)).